The sequence spans 347 residues: 4-hydroxy-3-methylbut-2-en-1-yl diphosphate synthase (flavodoxin) (347 aa).

The [4Fe-4S] cluster site is built by Cys259, Cys262, Cys294, and Glu301.

It belongs to the IspG family. [4Fe-4S] cluster is required as a cofactor.

The catalysed reaction is (2E)-4-hydroxy-3-methylbut-2-enyl diphosphate + oxidized [flavodoxin] + H2O + 2 H(+) = 2-C-methyl-D-erythritol 2,4-cyclic diphosphate + reduced [flavodoxin]. The protein operates within isoprenoid biosynthesis; isopentenyl diphosphate biosynthesis via DXP pathway; isopentenyl diphosphate from 1-deoxy-D-xylulose 5-phosphate: step 5/6. Its function is as follows. Converts 2C-methyl-D-erythritol 2,4-cyclodiphosphate (ME-2,4cPP) into 1-hydroxy-2-methyl-2-(E)-butenyl 4-diphosphate. The polypeptide is 4-hydroxy-3-methylbut-2-en-1-yl diphosphate synthase (flavodoxin) (Caldicellulosiruptor saccharolyticus (strain ATCC 43494 / DSM 8903 / Tp8T 6331)).